Reading from the N-terminus, the 398-residue chain is Exodeoxyribonuclease 7 large subunit (398 aa).

Belongs to the XseA family. As to quaternary structure, heterooligomer composed of large and small subunits.

The protein resides in the cytoplasm. It catalyses the reaction Exonucleolytic cleavage in either 5'- to 3'- or 3'- to 5'-direction to yield nucleoside 5'-phosphates.. Its function is as follows. Bidirectionally degrades single-stranded DNA into large acid-insoluble oligonucleotides, which are then degraded further into small acid-soluble oligonucleotides. The polypeptide is Exodeoxyribonuclease 7 large subunit (Anaplasma phagocytophilum (strain HZ)).